A 324-amino-acid polypeptide reads, in one-letter code: Aspartate carbamoyltransferase catalytic subunit (324 aa).

Positions 65 and 66 each coordinate carbamoyl phosphate. Residue lysine 93 participates in L-aspartate binding. Carbamoyl phosphate is bound by residues arginine 115, histidine 145, and glutamine 148. Positions 178 and 233 each coordinate L-aspartate. Positions 274 and 275 each coordinate carbamoyl phosphate.

The protein belongs to the aspartate/ornithine carbamoyltransferase superfamily. ATCase family. Heterododecamer (2C3:3R2) of six catalytic PyrB chains organized as two trimers (C3), and six regulatory PyrI chains organized as three dimers (R2).

The enzyme catalyses carbamoyl phosphate + L-aspartate = N-carbamoyl-L-aspartate + phosphate + H(+). It participates in pyrimidine metabolism; UMP biosynthesis via de novo pathway; (S)-dihydroorotate from bicarbonate: step 2/3. Functionally, catalyzes the condensation of carbamoyl phosphate and aspartate to form carbamoyl aspartate and inorganic phosphate, the committed step in the de novo pyrimidine nucleotide biosynthesis pathway. The chain is Aspartate carbamoyltransferase catalytic subunit from Nitrosococcus oceani (strain ATCC 19707 / BCRC 17464 / JCM 30415 / NCIMB 11848 / C-107).